A 568-amino-acid polypeptide reads, in one-letter code: Pentatricopeptide repeat-containing protein At1g73400, mitochondrial (568 aa).

The N-terminal 55 residues, 1 to 55 (MMRRLVSYFVRSRFSLHLSTTPPQRSALFSHILSSHLDSIQINKKISSFSVHRFC), are a transit peptide targeting the mitochondrion. 8 PPR repeats span residues 233-263 (EINA…MRHR), 267-301 (DANT…GHKP), 302-336 (ENFT…GSAV), 340-374 (TAKT…GCLP), 375-409 (DVST…GYPP), 410-444 (DIVT…RCAP), 445-479 (SVQT…DCVQ), and 480-514 (DVET…GLKL).

The protein belongs to the PPR family. P subfamily.

The protein localises to the mitochondrion. This Arabidopsis thaliana (Mouse-ear cress) protein is Pentatricopeptide repeat-containing protein At1g73400, mitochondrial.